A 437-amino-acid polypeptide reads, in one-letter code: Acyl-coenzyme A thioesterase 9, mitochondrial (437 aa).

The N-terminal 21 residues, 1–21 (MRRAALRLCTLSKGLLAPSRG), are a transit peptide targeting the mitochondrion. HotDog ACOT-type domains follow at residues 84–207 (SYIE…RDSE) and 287–399 (ENSK…EKEV). Lysine 101 bears the N6-acetyllysine mark.

This sequence belongs to the acyl coenzyme A hydrolase family. As to quaternary structure, interacts with NYAP1, NYAP2 and MYO16.

The protein resides in the mitochondrion. The protein localises to the mitochondrion matrix. It is found in the mitochondrion inner membrane. It catalyses the reaction butanoyl-CoA + H2O = butanoate + CoA + H(+). The enzyme catalyses propanoyl-CoA + H2O = propanoate + CoA + H(+). It carries out the reaction hexadecanoyl-CoA + H2O = hexadecanoate + CoA + H(+). The catalysed reaction is octanoyl-CoA + H2O = octanoate + CoA + H(+). It catalyses the reaction decanoyl-CoA + H2O = decanoate + CoA + H(+). The enzyme catalyses tetradecanoyl-CoA + H2O = tetradecanoate + CoA + H(+). It carries out the reaction 4,8-dimethylnonanoyl-CoA + H2O = 4,8-dimethylnonanoate + CoA + H(+). The catalysed reaction is 3-methylbutanoyl-CoA + H2O = 3-methylbutanoate + CoA + H(+). It catalyses the reaction 2-methylpropanoyl-CoA + H2O = 2-methylpropanoate + CoA + H(+). It functions in the pathway lipid metabolism; fatty acid metabolism. Strongly inhibited by NADH and CoA. Its function is as follows. Mitochondrial acyl-CoA thioesterase. Catalyzes the hydrolysis of acyl-CoAs into free fatty acids and coenzyme A (CoA), regulating their respective intracellular levels. Regulates both mitochondrial lipid and amino acid metabolism. This Bos taurus (Bovine) protein is Acyl-coenzyme A thioesterase 9, mitochondrial (ACOT9).